Reading from the N-terminus, the 270-residue chain is uncharacterized protein (270 aa).

Residues 1-23 form the signal peptide; that stretch reads MFNFITFILFAVVCISYCHKSRG. 2 N-linked (GlcNAc...) asparagine glycosylation sites follow: N246 and N252.

It is found in the secreted. This is an uncharacterized protein from Caenorhabditis elegans.